We begin with the raw amino-acid sequence, 131 residues long: Biogenesis of lysosome-related organelles complex 1 subunit 5 (131 aa).

The protein belongs to the BLOC1S5 family. In terms of assembly, component of the biogenesis of lysosome-related organelles complex-1 (BLOC-1) composed at least of blos-1, blos-2, blos-4, dsbn-1, glo-2, mutd-1 and snpn-1.

In terms of biological role, component of the biogenesis of lysosome-related organelles complex-1 (BLOC-1) involved in gut granule biogenesis. This Caenorhabditis elegans protein is Biogenesis of lysosome-related organelles complex 1 subunit 5 (mutd-1).